We begin with the raw amino-acid sequence, 74 residues long: SPbeta prophage-derived uncharacterized HTH-type transcriptional regulator YopS (74 aa).

An HTH cro/C1-type domain is found at Ile11 to Leu66. The H-T-H motif DNA-binding region spans Ile22–Arg41.

The chain is SPbeta prophage-derived uncharacterized HTH-type transcriptional regulator YopS (yopS) from Bacillus subtilis (strain 168).